A 2898-amino-acid polypeptide reads, in one-letter code: Pericentrin (2898 aa).

Residues methionine 1–serine 117 are disordered. The span at serine 34–serine 44 shows a compositional bias: basic residues. Position 44 is a phosphoserine (serine 44). 2 coiled-coil regions span residues leucine 127–leucine 343 and alanine 382–glutamate 434. The interval arginine 429–leucine 460 is disordered. Residues threonine 448–proline 457 are compositionally biased toward basic and acidic residues. Coiled-coil stretches lie at residues lysine 468–lysine 527, cysteine 611–histidine 696, valine 727–methionine 787, and serine 872–leucine 939. The residue at position 1022 (serine 1022) is a Phosphoserine. Coiled coils occupy residues glutamate 1069 to methionine 1383, asparagine 1429 to glycine 1482, and glutamine 1529 to alanine 1593. Phosphoserine is present on serine 1437. Disordered regions lie at residues valine 1745–leucine 1786, threonine 1815–proline 1880, and threonine 1958–isoleucine 1979. 2 stretches are compositionally biased toward polar residues: residues serine 1747–glycine 1766 and glutamate 1817–serine 1834. Residues asparagine 1801–glutamine 1822 form an interaction with CDK5RAP2 region. Phosphoserine is present on residues serine 1828, serine 1859, serine 1860, and serine 1959. Basic and acidic residues predominate over residues glutamate 1963 to glycine 1976. Residue serine 1987 is modified to Phosphoserine. The span at serine 2046 to leucine 2055 shows a compositional bias: polar residues. Residues serine 2046 to glutamate 2088 are disordered. Basic and acidic residues-rich tracts occupy residues glycine 2058–proline 2068 and threonine 2078–glutamate 2088. A Phosphoserine modification is found at serine 2128. 2 coiled-coil regions span residues lysine 2211 to glutamine 2403 and histidine 2429 to methionine 2590. Disordered regions lie at residues valine 2509–glutamate 2532 and asparagine 2653–serine 2684. Residues leucine 2545–proline 2810 form an interaction with NEK2 region. Residues asparagine 2653–leucine 2671 are compositionally biased toward polar residues. The segment at lysine 2758–arginine 2771 is calmodulin-binding. Positions alanine 2787–glutamine 2898 are disordered. The span at lysine 2792 to glutamine 2802 shows a compositional bias: basic residues. Residues threonine 2845–glutamine 2860 are compositionally biased toward polar residues. A compositionally biased stretch (basic and acidic residues) spans aspartate 2861 to glutamate 2874. At serine 2865 the chain carries Phosphoserine.

Interacts with DISC1 and PCM1. Binds calmodulin. Interacts with CEP131. Interacts with CDK5RAP2; the interaction is leading to centrosomal localization of PCNT and CDK5RAP2. Interacts with CHD3. Interacts with CHD4; the interaction regulates centrosome integrity. Interacts with NEK2. Interacts with CCDC13. Interacts with CEP68. Interacts with ATF5; the ATF5:PCNT:polyglutamylated tubulin (PGT) tripartite unites the mother centriole and the pericentriolar material (PCM) in the centrosome. In terms of processing, cleaved during mitotis which leads to removal of CDK5RAP2 from the centrosome and promotes centriole disengagement and subsequent centriole separation. The C-terminal fragment is rapidly degraded following cleavage. Post-translationally, ubiquitinated by TRIM43; leading to proteasomal degradation. Expressed in heart and lung (at protein level). Expressed in kidney, thymus, liver, brain, muscle, testis, spleen, lung and heart.

The protein resides in the cytoplasm. Its subcellular location is the cytoskeleton. It localises to the microtubule organizing center. The protein localises to the centrosome. Integral component of the filamentous matrix of the centrosome involved in the initial establishment of organized microtubule arrays in both mitosis and meiosis. Plays a role, together with DISC1, in the microtubule network formation. Is an integral component of the pericentriolar material (PCM). May play an important role in preventing premature centrosome splitting during interphase by inhibiting NEK2 kinase activity at the centrosome. This chain is Pericentrin (Pcnt), found in Mus musculus (Mouse).